A 293-amino-acid polypeptide reads, in one-letter code: tRNA-cytidine(32) 2-sulfurtransferase (293 aa).

Residues 71–76 (SGGKDS) carry the PP-loop motif motif. Residues Cys-146, Cys-149, and Cys-237 each coordinate [4Fe-4S] cluster.

This sequence belongs to the TtcA family. As to quaternary structure, homodimer. The cofactor is Mg(2+). [4Fe-4S] cluster serves as cofactor.

Its subcellular location is the cytoplasm. It carries out the reaction cytidine(32) in tRNA + S-sulfanyl-L-cysteinyl-[cysteine desulfurase] + AH2 + ATP = 2-thiocytidine(32) in tRNA + L-cysteinyl-[cysteine desulfurase] + A + AMP + diphosphate + H(+). It participates in tRNA modification. Its function is as follows. Catalyzes the ATP-dependent 2-thiolation of cytidine in position 32 of tRNA, to form 2-thiocytidine (s(2)C32). The sulfur atoms are provided by the cysteine/cysteine desulfurase (IscS) system. In Sinorhizobium medicae (strain WSM419) (Ensifer medicae), this protein is tRNA-cytidine(32) 2-sulfurtransferase.